A 136-amino-acid chain; its full sequence is Glutamate mutase sigma subunit (136 aa).

A B12-binding domain is found at Lys3–Ile136. Adenosylcob(III)alamin-binding positions include Ser13 to Thr17, His16, and Ser61 to Ile63.

The protein belongs to the methylaspartate mutase GlmS subunit family. Heterotetramer composed of 2 epsilon subunits (GlmE) and 2 sigma subunits (GlmS). GlmE exists as a homodimer and GlmS as a monomer. Adenosylcob(III)alamin serves as cofactor.

The catalysed reaction is (2S,3S)-3-methyl-L-aspartate = L-glutamate. It functions in the pathway amino-acid degradation; L-glutamate degradation via mesaconate pathway; acetate and pyruvate from L-glutamate: step 1/4. Functionally, catalyzes the carbon skeleton rearrangement of L-glutamate to L-threo-3-methylaspartate ((2S,3S)-3-methylaspartate). The polypeptide is Glutamate mutase sigma subunit (Fusobacterium nucleatum subsp. nucleatum (strain ATCC 25586 / DSM 15643 / BCRC 10681 / CIP 101130 / JCM 8532 / KCTC 2640 / LMG 13131 / VPI 4355)).